Here is a 239-residue protein sequence, read N- to C-terminus: UPF0502 protein Bcen_5249 (239 aa).

The interval 196–239 is disordered; that stretch reads IRGAKGRTEAPRGRSGATQCAGSTDGERTRHRRRRTGRRVLIAS. A compositionally biased stretch (basic residues) spans 224–233; it reads TRHRRRRTGR.

Belongs to the UPF0502 family.

The sequence is that of UPF0502 protein Bcen_5249 from Burkholderia orbicola (strain AU 1054).